Here is a 333-residue protein sequence, read N- to C-terminus: MRNACTRARLTRTARAMVKTLFIAIASVTFFFTSDLALPQSAAAYPFWAQQTYPETPREPTGRIVCANCHLAAKPTEVEVPQSVLPDTVFKAVVKIPYDTSVQQVGADGSKVGLNVGAVLMLPEGFKIAPEDRIPEELKEEIGDVYFQPYGEDKDNIVIVGPLPGEQYQEIVFPVLSPNPANDKNIHFGKYSVHVGGNRGRGQVYPTGEKSNNNLYSAAATGTISKIAKQEGEDGSVKYLVDIKTESGEVVSDTIPAGPELIVSEGQAVTAGDALTNNPNVGGFGQLDAEIVLQDANRVGWLIAFVALVMLAQVMLVLKKKQVEKVQAAEMNF.

The N-terminal stretch at 1–44 (MRNACTRARLTRTARAMVKTLFIAIASVTFFFTSDLALPQSAAA) is a signal peptide. Heme is bound by residues Y45, C66, C69, and H70. Residues 299–318 (VGWLIAFVALVMLAQVMLVL) traverse the membrane as a helical segment.

This sequence belongs to the cytochrome f family. As to quaternary structure, the 4 large subunits of the cytochrome b6-f complex are cytochrome b6, subunit IV (17 kDa polypeptide, PetD), cytochrome f and the Rieske protein, while the 4 small subunits are PetG, PetL, PetM and PetN. The complex functions as a dimer. The cofactor is heme.

Its subcellular location is the cellular thylakoid membrane. Component of the cytochrome b6-f complex, which mediates electron transfer between photosystem II (PSII) and photosystem I (PSI), cyclic electron flow around PSI, and state transitions. The chain is Cytochrome f from Nostoc sp. (strain PCC 7120 / SAG 25.82 / UTEX 2576).